Consider the following 768-residue polypeptide: Phosphoribosylformylglycinamidine synthase subunit PurL (768 aa).

His53 is an active-site residue. Tyr56 is a binding site for ATP. Glu98 is a binding site for Mg(2+). Residues Ser99–His102 and Arg121 contribute to the substrate site. His100 functions as the Proton acceptor in the catalytic mechanism. Asp122 serves as a coordination point for Mg(2+). Substrate is bound at residue Gln253. Residue Asp285 coordinates Mg(2+). Glu328–Gln330 contacts substrate. Asp516 and Gly561 together coordinate ATP. Mg(2+) is bound at residue Asn562. Position 564 (Ser564) interacts with substrate.

The protein belongs to the FGAMS family. Monomer. Part of the FGAM synthase complex composed of 1 PurL, 1 PurQ and 2 PurS subunits.

It is found in the cytoplasm. It catalyses the reaction N(2)-formyl-N(1)-(5-phospho-beta-D-ribosyl)glycinamide + L-glutamine + ATP + H2O = 2-formamido-N(1)-(5-O-phospho-beta-D-ribosyl)acetamidine + L-glutamate + ADP + phosphate + H(+). It participates in purine metabolism; IMP biosynthesis via de novo pathway; 5-amino-1-(5-phospho-D-ribosyl)imidazole from N(2)-formyl-N(1)-(5-phospho-D-ribosyl)glycinamide: step 1/2. Functionally, part of the phosphoribosylformylglycinamidine synthase complex involved in the purines biosynthetic pathway. Catalyzes the ATP-dependent conversion of formylglycinamide ribonucleotide (FGAR) and glutamine to yield formylglycinamidine ribonucleotide (FGAM) and glutamate. The FGAM synthase complex is composed of three subunits. PurQ produces an ammonia molecule by converting glutamine to glutamate. PurL transfers the ammonia molecule to FGAR to form FGAM in an ATP-dependent manner. PurS interacts with PurQ and PurL and is thought to assist in the transfer of the ammonia molecule from PurQ to PurL. In Methanothrix thermoacetophila (strain DSM 6194 / JCM 14653 / NBRC 101360 / PT) (Methanosaeta thermophila), this protein is Phosphoribosylformylglycinamidine synthase subunit PurL.